The sequence spans 585 residues: Arginine--tRNA ligase (585 aa).

Positions 130–140 (ANPTGPMHVGH) match the 'HIGH' region motif.

Belongs to the class-I aminoacyl-tRNA synthetase family. In terms of assembly, monomer.

The protein localises to the cytoplasm. The enzyme catalyses tRNA(Arg) + L-arginine + ATP = L-arginyl-tRNA(Arg) + AMP + diphosphate. The chain is Arginine--tRNA ligase from Methylorubrum extorquens (strain PA1) (Methylobacterium extorquens).